We begin with the raw amino-acid sequence, 347 residues long: Aspartate-semialdehyde dehydrogenase (347 aa).

NADP(+) contacts are provided by residues 13 to 16 (TGAV) and 41 to 42 (RS). Arg101 contacts phosphate. Cys132 (acyl-thioester intermediate) is an active-site residue. Residue Gln159 coordinates substrate. 162 to 163 (SG) is a binding site for NADP(+). Residue Lys216 coordinates phosphate. Arg238 contacts substrate. The Proton acceptor role is filled by His245. Asn319 provides a ligand contact to NADP(+).

Belongs to the aspartate-semialdehyde dehydrogenase family. As to quaternary structure, homodimer.

The enzyme catalyses L-aspartate 4-semialdehyde + phosphate + NADP(+) = 4-phospho-L-aspartate + NADPH + H(+). It functions in the pathway amino-acid biosynthesis; L-lysine biosynthesis via DAP pathway; (S)-tetrahydrodipicolinate from L-aspartate: step 2/4. Its pathway is amino-acid biosynthesis; L-methionine biosynthesis via de novo pathway; L-homoserine from L-aspartate: step 2/3. It participates in amino-acid biosynthesis; L-threonine biosynthesis; L-threonine from L-aspartate: step 2/5. Functionally, catalyzes the NADPH-dependent formation of L-aspartate-semialdehyde (L-ASA) by the reductive dephosphorylation of L-aspartyl-4-phosphate. This chain is Aspartate-semialdehyde dehydrogenase, found in Legionella pneumophila.